We begin with the raw amino-acid sequence, 440 residues long: DNA polymerase delta small subunit (440 aa).

This sequence belongs to the DNA polymerase delta/II small subunit family. Heterodimer with subunits of 125 kDa and 50 kDa.

It localises to the nucleus. The catalysed reaction is DNA(n) + a 2'-deoxyribonucleoside 5'-triphosphate = DNA(n+1) + diphosphate. Functionally, the function of the small subunit is not yet clear. This is DNA polymerase delta small subunit (POLD2) from Arabidopsis thaliana (Mouse-ear cress).